Consider the following 461-residue polypeptide: Probable outer membrane lipoprotein SilC (461 aa).

The signal sequence occupies residues 1 to 17; the sequence is MFKLKLLSISTIFILAG. The N-palmitoyl cysteine moiety is linked to residue C18. C18 is lipidated: S-diacylglycerol cysteine.

Belongs to the outer membrane factor (OMF) (TC 1.B.17) family.

It is found in the cell outer membrane. Its function is as follows. Component of the sil cation-efflux system that confers resistance to silver. May be part of a three-component cation/proton antiporter. This Salmonella typhimurium protein is Probable outer membrane lipoprotein SilC (silC).